The following is a 424-amino-acid chain: Gamma-glutamyl phosphate reductase (424 aa).

Belongs to the gamma-glutamyl phosphate reductase family.

The protein resides in the cytoplasm. The catalysed reaction is L-glutamate 5-semialdehyde + phosphate + NADP(+) = L-glutamyl 5-phosphate + NADPH + H(+). The protein operates within amino-acid biosynthesis; L-proline biosynthesis; L-glutamate 5-semialdehyde from L-glutamate: step 2/2. Functionally, catalyzes the NADPH-dependent reduction of L-glutamate 5-phosphate into L-glutamate 5-semialdehyde and phosphate. The product spontaneously undergoes cyclization to form 1-pyrroline-5-carboxylate. The chain is Gamma-glutamyl phosphate reductase from Dehalococcoides mccartyi (strain ATCC BAA-2100 / JCM 16839 / KCTC 5957 / BAV1).